The following is a 301-amino-acid chain: Acetylglutamate kinase (301 aa).

Substrate contacts are provided by residues 64-65, R86, and N181; that span reads GG.

Belongs to the acetylglutamate kinase family. ArgB subfamily.

The protein resides in the cytoplasm. It catalyses the reaction N-acetyl-L-glutamate + ATP = N-acetyl-L-glutamyl 5-phosphate + ADP. Its pathway is amino-acid biosynthesis; L-arginine biosynthesis; N(2)-acetyl-L-ornithine from L-glutamate: step 2/4. In terms of biological role, catalyzes the ATP-dependent phosphorylation of N-acetyl-L-glutamate. The protein is Acetylglutamate kinase of Aliarcobacter butzleri (strain RM4018) (Arcobacter butzleri).